Here is a 296-residue protein sequence, read N- to C-terminus: D-alanine--D-alanine ligase (296 aa).

The 191-residue stretch at 103–293 folds into the ATP-grasp domain; the sequence is KEILMHHRMP…FDSFVKRIIE (191 aa). 129–180 provides a ligand contact to ATP; the sequence is ISFPVAVKPSSGGSSIATFKVKSIQELKHAYEEASKYGEVMIEQWVTGKEIT. The Mg(2+) site is built by D247, E260, and N262.

The protein belongs to the D-alanine--D-alanine ligase family. The cofactor is Mg(2+). Requires Mn(2+) as cofactor.

Its subcellular location is the cytoplasm. It catalyses the reaction 2 D-alanine + ATP = D-alanyl-D-alanine + ADP + phosphate + H(+). Its pathway is cell wall biogenesis; peptidoglycan biosynthesis. In terms of biological role, cell wall formation. This Francisella tularensis subsp. novicida (strain U112) protein is D-alanine--D-alanine ligase.